Here is a 451-residue protein sequence, read N- to C-terminus: Enolase (451 aa).

Position 167 (Gln-167) interacts with (2R)-2-phosphoglycerate. Glu-209 acts as the Proton donor in catalysis. Residues Asp-250, Glu-307, and Asp-334 each coordinate Mg(2+). (2R)-2-phosphoglycerate contacts are provided by Lys-359, Arg-388, Ser-389, and Lys-410. Lys-359 (proton acceptor) is an active-site residue.

It belongs to the enolase family. Requires Mg(2+) as cofactor.

It localises to the cytoplasm. It is found in the secreted. The protein localises to the cell surface. The enzyme catalyses (2R)-2-phosphoglycerate = phosphoenolpyruvate + H2O. It functions in the pathway carbohydrate degradation; glycolysis; pyruvate from D-glyceraldehyde 3-phosphate: step 4/5. In terms of biological role, catalyzes the reversible conversion of 2-phosphoglycerate (2-PG) into phosphoenolpyruvate (PEP). It is essential for the degradation of carbohydrates via glycolysis. The polypeptide is Enolase (Mesomycoplasma hyopneumoniae (strain J / ATCC 25934 / NCTC 10110) (Mycoplasma hyopneumoniae)).